We begin with the raw amino-acid sequence, 1203 residues long: DNA-directed RNA polymerase subunit beta' (1203 aa).

Zn(2+) is bound by residues Cys-60, Cys-62, Cys-75, and Cys-78. Asp-449, Asp-451, and Asp-453 together coordinate Mg(2+). Zn(2+) contacts are provided by Cys-818, Cys-892, Cys-899, and Cys-902.

The protein belongs to the RNA polymerase beta' chain family. As to quaternary structure, the RNAP catalytic core consists of 2 alpha, 1 beta, 1 beta' and 1 omega subunit. When a sigma factor is associated with the core the holoenzyme is formed, which can initiate transcription. It depends on Mg(2+) as a cofactor. Requires Zn(2+) as cofactor.

The catalysed reaction is RNA(n) + a ribonucleoside 5'-triphosphate = RNA(n+1) + diphosphate. In terms of biological role, DNA-dependent RNA polymerase catalyzes the transcription of DNA into RNA using the four ribonucleoside triphosphates as substrates. The sequence is that of DNA-directed RNA polymerase subunit beta' from Bacillus anthracis.